Reading from the N-terminus, the 430-residue chain is MAEAVLIDLFGLKLNSQKNCHQTLLKTLNAVQYHHAAKAKFLCIMCCSNISYERDGEQDNCEIETSNGLSALLEEFEIVSCPSMAATLYTIKQKIDEKNLSSIKVIVPRHRKTLMKAFIDQLFTDVYNFEFEDLQVTFRGGLFKQSIEINVITAQELRGIQNEIETFLRSLPALRGKLTIITSSLIPDIFIHGFTTRTGGISYIPTLSSFNLFSSSKRRDPKVVVQENLRRLANAAGFNVEKFYRIKTHHSNDIWIMGRKEPDSYDGITTNQRGVTIAALGADCIPIVFADPVKKACGVAHAGWKGTLLGVAMATVNAMIAEYGCSLEDIVVVLGPSVGPCCFTLPRESAEAFHNLHPACVQLFDSPNPCIDIRKATRILLEQGGILPQNIQDQNQDLNLCTSCHPDKFFSHVRDGLNFGTQIGFISIKE.

At Lys-247 the chain carries N6-acetyllysine. The Zn(2+) site is built by His-250, Cys-284, and His-301.

This sequence belongs to the purine nucleoside phosphorylase YfiH/LACC1 family. In terms of assembly, interacts with FASN. Interacts with SDHA. Interacts with ATF6, EIF2AK3 and ERN1. In terms of processing, phosphorylated on tyrosine residues. Ubiquitously expressed, with higher expression levels in immune-related tissues such as lymph nodes and spleen. Expressed in both intestinal and peripheral myeloid-derived cells.

It localises to the cytoplasm. It is found in the nucleus. The protein resides in the endoplasmic reticulum. Its subcellular location is the peroxisome. The enzyme catalyses adenosine + phosphate = alpha-D-ribose 1-phosphate + adenine. The catalysed reaction is inosine + phosphate = alpha-D-ribose 1-phosphate + hypoxanthine. It catalyses the reaction guanosine + phosphate = alpha-D-ribose 1-phosphate + guanine. It carries out the reaction S-methyl-5'-thioadenosine + phosphate = 5-(methylsulfanyl)-alpha-D-ribose 1-phosphate + adenine. The enzyme catalyses adenosine + H2O + H(+) = inosine + NH4(+). Its function is as follows. Purine nucleoside enzyme that catalyzes the phosphorolysis of adenosine, guanosine and inosine nucleosides, yielding D-ribose 1-phosphate and the respective free bases, adenine, guanine and hypoxanthine. Also catalyzes the phosphorolysis of S-methyl-5'-thioadenosine into adenine and S-methyl-5-thio-alpha-D-ribose 1-phosphate. Also has adenosine deaminase activity. Acts as a regulator of innate immunity in macrophages by modulating the purine nucleotide metabolism, thereby regulating the metabolic function and bioenergetic state of macrophages. Enables a purine nucleotide cycle between adenosine and inosine monophosphate and adenylosuccinate that prevents cytoplasmic acidification and balances the cytoplasmic-mitochondrial redox interface. The purine nucleotide cycle consumes aspartate and releases fumarate in a manner involving fatty acid oxidation and ATP-citrate lyase activity. Participates in pattern recognition receptor (PRR)-induced cytokines in macrophages: associates with the NOD2-signaling complex and promotes optimal NOD2-induced signaling, cytokine secretion and bacterial clearance. Localizes to the endoplasmic reticulum upon PRR stimulation of macrophages and associates with endoplasmic reticulum-stress sensors, promoting the endoplasmic reticulum unfolded protein response (UPR). Does not show laccase activity. This is Purine nucleoside phosphorylase LACC1 from Homo sapiens (Human).